The sequence spans 205 residues: Recombination protein RecR (205 aa).

The segment at 64–79 (CRRCFNITVDELCPIC) adopts a C4-type zinc-finger fold. The Toprim domain occupies 87–182 (TKICVVEEPL…RVTRPARGLP (96 aa)).

It belongs to the RecR family.

In terms of biological role, may play a role in DNA repair. It seems to be involved in an RecBC-independent recombinational process of DNA repair. It may act with RecF and RecO. The polypeptide is Recombination protein RecR (Chloroflexus aggregans (strain MD-66 / DSM 9485)).